The sequence spans 476 residues: Serine--tRNA ligase (476 aa).

280 to 282 is a binding site for L-serine; sequence TAE. Residue 311 to 313 coordinates ATP; sequence RAE. L-serine is bound at residue Glu-334. Residue 401–404 coordinates ATP; that stretch reads EISS. Ser-436 is an L-serine binding site.

The protein belongs to the class-II aminoacyl-tRNA synthetase family. Type-1 seryl-tRNA synthetase subfamily. As to quaternary structure, homodimer. The tRNA molecule binds across the dimer.

It is found in the cytoplasm. The enzyme catalyses tRNA(Ser) + L-serine + ATP = L-seryl-tRNA(Ser) + AMP + diphosphate + H(+). The catalysed reaction is tRNA(Sec) + L-serine + ATP = L-seryl-tRNA(Sec) + AMP + diphosphate + H(+). It functions in the pathway aminoacyl-tRNA biosynthesis; selenocysteinyl-tRNA(Sec) biosynthesis; L-seryl-tRNA(Sec) from L-serine and tRNA(Sec): step 1/1. Catalyzes the attachment of serine to tRNA(Ser). Is also able to aminoacylate tRNA(Sec) with serine, to form the misacylated tRNA L-seryl-tRNA(Sec), which will be further converted into selenocysteinyl-tRNA(Sec). The polypeptide is Serine--tRNA ligase (Rhodopseudomonas palustris (strain HaA2)).